Here is a 339-residue protein sequence, read N- to C-terminus: Uracil nucleotide/cysteinyl leukotriene receptor (339 aa).

Topologically, residues 1–36 are extracellular; sequence MDGLETALPSLTDNASLAYSEQCGQETPLENMLFAC. N14 carries an N-linked (GlcNAc...) asparagine glycan. The chain crosses the membrane as a helical span at residues 37 to 57; that stretch reads FYLLDFILAFVGNALALWLFI. Over 58 to 64 the chain is Cytoplasmic; sequence WDHKSGT. Residues 65–85 traverse the membrane as a helical segment; sequence PANVFLMHLAVADLSCVLVLP. Over 86–105 the chain is Extracellular; that stretch reads TRLVYHFSGNHWPFGEIPCR. A disulfide bond links C104 and C181. A helical membrane pass occupies residues 106–126; the sequence is LTGFLFYLNMYASIYFLTCIS. Topologically, residues 127–147 are cytoplasmic; sequence ADRFLAIVHPVKSLKLRRPLY. A helical transmembrane segment spans residues 148–168; the sequence is AHLACAFLWIVVAVAMAPLLV. Residues 169–195 lie on the Extracellular side of the membrane; the sequence is SPQTVQTNHTVVCLQLYREKASHHALA. An N-linked (GlcNAc...) asparagine glycan is attached at N176. The chain crosses the membrane as a helical span at residues 196 to 216; sequence SLAVAFTFPFITTVTCYLLII. Residues 217-232 are Cytoplasmic-facing; the sequence is RSLRQGPRIEKHLKNK. The chain crosses the membrane as a helical span at residues 233–253; it reads AVRMIAMVLAIFLICFVPYHI. Topologically, residues 254 to 280 are extracellular; that stretch reads HRSVYVLHYRGGGTSCSAQRALALGNR. The chain crosses the membrane as a helical span at residues 281–301; that stretch reads ITSCLTSLNGALDPVMYFFVA. The Cytoplasmic segment spans residues 302 to 339; the sequence is EKFRHALCNLLCSKRLTGPPPSFEGKTNESSLSARSEL.

Belongs to the G-protein coupled receptor 1 family. In terms of tissue distribution, expressed in brain, kidney, and heart. Highest level in brain.

The protein resides in the cell membrane. Dual specificity receptor for uracil nucleotides and cysteinyl leukotrienes (CysLTs). Signals through G(i) and inhibition of adenylyl cyclase. May mediate brain damage by nucleotides and CysLTs following ischemia. The sequence is that of Uracil nucleotide/cysteinyl leukotriene receptor from Rattus norvegicus (Rat).